The following is a 317-amino-acid chain: Acetyl-coenzyme A carboxylase carboxyl transferase subunit alpha (317 aa).

The 254-residue stretch at 40–293 folds into the CoA carboxyltransferase C-terminal domain; sequence LEKRSADALK…GDIIAASLRS (254 aa).

This sequence belongs to the AccA family. In terms of assembly, acetyl-CoA carboxylase is a heterohexamer composed of biotin carboxyl carrier protein (AccB), biotin carboxylase (AccC) and two subunits each of ACCase subunit alpha (AccA) and ACCase subunit beta (AccD).

The protein resides in the cytoplasm. The enzyme catalyses N(6)-carboxybiotinyl-L-lysyl-[protein] + acetyl-CoA = N(6)-biotinyl-L-lysyl-[protein] + malonyl-CoA. It participates in lipid metabolism; malonyl-CoA biosynthesis; malonyl-CoA from acetyl-CoA: step 1/1. Functionally, component of the acetyl coenzyme A carboxylase (ACC) complex. First, biotin carboxylase catalyzes the carboxylation of biotin on its carrier protein (BCCP) and then the CO(2) group is transferred by the carboxyltransferase to acetyl-CoA to form malonyl-CoA. The polypeptide is Acetyl-coenzyme A carboxylase carboxyl transferase subunit alpha (Brucella melitensis biotype 2 (strain ATCC 23457)).